Consider the following 47-residue polypeptide: Lysis protein for colicin E5 (47 aa).

Residues 1–19 form the signal peptide; that stretch reads MKKITWIILLLLAAIILAA. C20 carries the N-palmitoyl cysteine lipid modification. The S-diacylglycerol cysteine moiety is linked to residue C20.

It localises to the cell outer membrane. Lysis proteins are required for both colicin release and partial cell lysis. The polypeptide is Lysis protein for colicin E5 (lys) (Escherichia coli).